Consider the following 272-residue polypeptide: 2-succinyl-6-hydroxy-2,4-cyclohexadiene-1-carboxylate synthase (272 aa).

Belongs to the AB hydrolase superfamily. MenH family. In terms of assembly, monomer.

The catalysed reaction is 5-enolpyruvoyl-6-hydroxy-2-succinyl-cyclohex-3-ene-1-carboxylate = (1R,6R)-6-hydroxy-2-succinyl-cyclohexa-2,4-diene-1-carboxylate + pyruvate. Its pathway is quinol/quinone metabolism; 1,4-dihydroxy-2-naphthoate biosynthesis; 1,4-dihydroxy-2-naphthoate from chorismate: step 3/7. It functions in the pathway quinol/quinone metabolism; menaquinone biosynthesis. Catalyzes a proton abstraction reaction that results in 2,5-elimination of pyruvate from 2-succinyl-5-enolpyruvyl-6-hydroxy-3-cyclohexene-1-carboxylate (SEPHCHC) and the formation of 2-succinyl-6-hydroxy-2,4-cyclohexadiene-1-carboxylate (SHCHC). The polypeptide is 2-succinyl-6-hydroxy-2,4-cyclohexadiene-1-carboxylate synthase (Yersinia pseudotuberculosis serotype I (strain IP32953)).